An 89-amino-acid chain; its full sequence is UPF0335 protein Nwi_0989 (89 aa).

Belongs to the UPF0335 family.

The polypeptide is UPF0335 protein Nwi_0989 (Nitrobacter winogradskyi (strain ATCC 25391 / DSM 10237 / CIP 104748 / NCIMB 11846 / Nb-255)).